The following is a 169-amino-acid chain: Putative ribonuclease VapC50 (169 aa).

Functionally, toxic component of a type II toxin-antitoxin (TA) system. An RNase. The cognate antitoxin is VapB50. The protein is Putative ribonuclease VapC50 of Mycobacterium tuberculosis (strain ATCC 25618 / H37Rv).